Reading from the N-terminus, the 133-residue chain is Capsid protein (133 aa).

This sequence belongs to the Leviviricetes capsid protein family. In terms of assembly, homodimer. The homodimers binds to the viral RNA via an operator hairpin, but also to many other RNA sequences in the viral genome; this interaction probably shifts the virus from the replicative to the assembly phase and ensures specific encapsidation of the viral genome. Interacts with the maturation protein A2.

Its subcellular location is the virion. Capsid protein self-assembles to form an icosahedral capsid with a T=3 symmetry, about 26 nm in diameter, and consisting of 89 capsid proteins dimers (178 capsid proteins). Involved in viral genome encapsidation through the interaction between a capsid protein dimer and the multiple packaging signals present in the RNA genome. Binding of the capsid proteins to the viral RNA induces a conformational change required for efficient T=3 shell formation. The capsid also contains 1 copy of the A2 maturation protein. Its function is as follows. Acts as a translational repressor of viral replicase synthesis late in infection. This latter function is the result of capsid protein interaction with an RNA hairpin which contains the replicase ribosome-binding site. The protein is Capsid protein of Escherichia virus Qbeta (Bacteriophage Q-beta).